Here is a 2149-residue protein sequence, read N- to C-terminus: Non-reducing polyketide synthase PvBS090_009107 (2149 aa).

The N-terminal acylcarrier protein transacylase domain (SAT) stretch occupies residues 8-244 (YLFGDQTGEF…VRVPVHAPYH (237 aa)). Residues 375-806 (QSKIAIIGLS…GGNTALLIED (432 aa)) enclose the Ketosynthase family 3 (KS3) domain. Active-site for beta-ketoacyl synthase activity residues include Cys-547, His-682, and His-724. The segment at 911 to 1231 (FVFTGQGAQY…LSAIYLAGVD (321 aa)) is malonyl-CoA:ACP transacylase (MAT) domain. Ser-1000 functions as the For acyl/malonyl transferase activity in the catalytic mechanism. Residues 1290–1604 (TTSVQRIVET…RQVLNTVLPP (315 aa)) form a product template (PT) domain region. The N-terminal hotdog fold stretch occupies residues 1294 to 1426 (QRIVETRDEG…CLVKFSDTHL (133 aa)). The region spanning 1294–1599 (QRIVETRDEG…FQGVPRQVLN (306 aa)) is the PKS/mFAS DH domain. Residue His-1326 is the Proton acceptor; for dehydratase activity of the active site. Residues 1454 to 1599 (SHRMHRGMFY…FQGVPRQVLN (146 aa)) are C-terminal hotdog fold. Asp-1512 functions as the Proton donor; for dehydratase activity in the catalytic mechanism. The disordered stretch occupies residues 1604–1631 (PAGGSKAAPRTTARAVPPPPINVEKPKS). One can recognise a Carrier 1 domain in the interval 1649 to 1726 (SAGPSVLVQA…DLKQLLSQAS (78 aa)). Residue Ser-1686 is modified to O-(pantetheine 4'-phosphoryl)serine. Low complexity-rich tracts occupy residues 1722–1731 (LSQASPSDSS) and 1744–1755 (SSSTEPSTPGTP). A disordered region spans residues 1722–1763 (LSQASPSDSSDSSEESHYSFRDSSSTEPSTPGTPAFFSPKRG). The 78-residue stretch at 1769-1846 (VGESETIKTI…AVETALDLKP (78 aa)) folds into the Carrier 2 domain. O-(pantetheine 4'-phosphoryl)serine is present on Ser-1806. The segment at 1875-2147 (STHPPATSIL…KLSAFIGRAM (273 aa)) is thioesterase (TE) domain. Catalysis depends on Ser-1965, which acts as the For thioesterase activity.

The catalysed reaction is 6 malonyl-CoA + acetyl-CoA + 6 H(+) = naphtopyrone YWA1 + 6 CO2 + 7 CoA + H2O. The protein operates within secondary metabolite biosynthesis. It functions in the pathway pigment biosynthesis. In terms of biological role, non-reducing polyketide synthase; part of the gene cluster 24 that mediates the biosynthesis of a pigment with an aromatic structure protecting the pigmented fungus from both ionizing and non-ionizing radiations based on a mechanism similar to melanin, that is, free radical quenching and spherical spatial arrangement. Catalyzes the biosynthesis of the gamma-naphthopyrone precursor YWA1, via condensation of one acetyl-CoA starter unit with 6 malonyl-CoA units. YWA1 is probably further processed by the additional enzymes present within the cluster 24, however these additional steps have not been characterized yet. YWA1 is not converted to DHN-melanin in Byssochlamys spectabilis since the use of the DHN-melanin pathway inhibitor pyroquilon does not result in a loss of pigmentation. The sequence is that of Non-reducing polyketide synthase PvBS090_009107 from Byssochlamys spectabilis (Paecilomyces variotii).